The chain runs to 421 residues: Esterase LipQ (421 aa).

Active-site residues include S249, D344, and H377.

Belongs to the 'GDXG' lipolytic enzyme family.

It carries out the reaction hexadecanoate ester + H2O = an aliphatic alcohol + hexadecanoate + H(+). In terms of biological role, shows lipase activity. Is highly immunogenic and may play an important role in the virulence and pathogenesis of M.tuberculosis infection, by altering the balance of cytokines. Significantly down-regulates the expression level of pro-inflammatory cytokines (TNF-alpha and IFN-gamma) and up-regulates the level of anti-inflammatory cytokines such as IL-4 and IL-10 as compared to LPS stimulated macrophages. Also inhibits the expression of iNOS, TLR2 and transcription factor NF-kappa-B in LPS stimulated macrophages whereas the expression of TLR-4 remains unchanged. This is Esterase LipQ from Mycobacterium tuberculosis (strain ATCC 25618 / H37Rv).